A 292-amino-acid chain; its full sequence is Insulin-like growth factor-binding protein 3 (292 aa).

The first 27 residues, 1 to 27 (MHPARPALWAAALTALTLLRGPPVARA), serve as a signal peptide directing secretion. An IGFBP N-terminal domain is found at 36–119 (PVVRCEPCDA…LNGRGFCANA (84 aa)). 6 disulfides stabilise this stretch: C40–C69, C43–C71, C51–C72, C60–C75, C83–C96, and C90–C116. 2 N-linked (GlcNAc...) asparagine glycosylation sites follow: N118 and N137. Disordered regions lie at residues 128–152 (YLPS…SVES) and 178–212 (KGHA…TEYG). Residue S149 is modified to Phosphoserine. Residues 178–191 (KGHARDSQRYKVDY) are compositionally biased toward basic and acidic residues. Positions 192-203 (ESQSTDTQNFSS) are enriched in polar residues. An N-linked (GlcNAc...) asparagine glycan is attached at N200. Position 202 is a phosphoserine (S202). Positions 211 to 286 (YGPCRREMED…DTKGKDDVHC (76 aa)) constitute a Thyroglobulin type-1 domain. Cystine bridges form between C214-C241, C252-C263, and C265-C286.

In terms of assembly, interacts with XLKD1. Binds IGF2 more than IGF1. Forms a ternary complex of about 140 to 150 kDa with IGF1 or IGF2 and a 85 kDa glycoprotein (ALS). Interacts with TMEM219. Phosphorylated by FAM20C in the extracellular medium.

It is found in the secreted. Its function is as follows. IGF-binding proteins prolong the half-life of the IGFs and have been shown to either inhibit or stimulate the growth promoting effects of the IGFs on cell culture. They alter the interaction of IGFs with their cell surface receptors. Also exhibits IGF-independent antiproliferative and apoptotic effects mediated by its receptor TMEM219/IGFBP-3R. Promotes testicular germ cell apoptosis. The protein is Insulin-like growth factor-binding protein 3 (Igfbp3) of Mus musculus (Mouse).